We begin with the raw amino-acid sequence, 513 residues long: DNA damage response protein kinase DUN1 (513 aa).

The span at Met1–Asp12 shows a compositional bias: basic and acidic residues. A disordered region spans residues Met1–Ser29. Ser10 carries the post-translational modification Phosphoserine. The FHA domain occupies Thr56–Leu112. Ser139 bears the Phosphoserine mark. The 281-residue stretch at Tyr200–Phe480 folds into the Protein kinase domain. ATP is bound by residues Leu206–Val214 and Lys229. The active-site Proton acceptor is Asp328. Position 380 is a phosphothreonine (Thr380).

The protein belongs to the protein kinase superfamily. CAMK Ser/Thr protein kinase family. CHEK2 subfamily. In terms of assembly, interacts with the PAB-dependent poly(A)-nuclease (PAN) complex regulatory subunit PAN3 via its forkhead-associated (FHA) domain. Post-translationally, autophosphorylation increases in response to DNA damage.

The protein localises to the nucleus. It catalyses the reaction L-seryl-[protein] + ATP = O-phospho-L-seryl-[protein] + ADP + H(+). It carries out the reaction L-threonyl-[protein] + ATP = O-phospho-L-threonyl-[protein] + ADP + H(+). Its function is as follows. Transducer of the DNA damage signal. Phosphorylates SML1 on serine residues. Cooperates with the PAN deadenylation complex in the regulation of RAD5 mRNA levels and cell survival in response to replicational stress. This chain is DNA damage response protein kinase DUN1 (DUN1), found in Saccharomyces cerevisiae (strain ATCC 204508 / S288c) (Baker's yeast).